We begin with the raw amino-acid sequence, 293 residues long: Aromatic amino acid exporter YddG (293 aa).

The Cytoplasmic segment spans residues 1 to 6 (MTRQKA). The EamA 1 domain maps to 6–137 (ATLIGLIAIV…LALVGVCWVL (132 aa)). Residues 7–27 (TLIGLIAIVLWSTMVGLIRGV) form a helical membrane-spanning segment. The Periplasmic segment spans residues 28-33 (SEGLGP). A helical transmembrane segment spans residues 34–54 (VGGAAAIYSLSGLLLIFTVGF). Residues 55 to 62 (PRIRQIPK) lie on the Cytoplasmic side of the membrane. Residues 63-83 (GYLLAGSLLFVSYEICLALSL) form a helical membrane-spanning segment. Residues 84-92 (GYAATHHQA) lie on the Periplasmic side of the membrane. A helical membrane pass occupies residues 93–113 (IEVGMVNYLWPSLTILFAILF). Residues 114-118 (NGQKT) are Cytoplasmic-facing. The helical transmembrane segment at 119–139 (NWLIVPGLLLALVGVCWVLGG) threads the bilayer. At 140–155 (DNGLHYDEIINNITTS) the chain is on the periplasmic side. A helical transmembrane segment spans residues 156–176 (PLSYFLAFIGAFIWAAYCTVT). The EamA 2 domain maps to 158 to 285 (SYFLAFIGAF…ALMVCGGSLL (128 aa)). Topologically, residues 177-182 (NKYARG) are cytoplasmic. Residues 183–203 (FNGITVFVLLTGASLWVYYFL) form a helical membrane-spanning segment. Residues 204-218 (TPQPEMIFSTPVMIK) lie on the Periplasmic side of the membrane. The helical transmembrane segment at 219–239 (LISAAFTLGFAYAAWNVGILH) threads the bilayer. Residues 240-243 (GNVT) lie on the Cytoplasmic side of the membrane. A helical transmembrane segment spans residues 244-264 (IMAVGSYFTPVLSSALAAVLL). The Periplasmic segment spans residues 265 to 267 (SAP). The chain crosses the membrane as a helical span at residues 268 to 288 (LSFSFWQGALMVCGGSLLCWL). At 289–293 (ATRRG) the chain is on the cytoplasmic side.

Belongs to the drug/metabolite transporter (DMT) superfamily. Aromatic amino acid/paraquat exporter (ArAA/P-E) (TC 2.A.7.17) family.

It is found in the cell inner membrane. The enzyme catalyses L-phenylalanine(in) = L-phenylalanine(out). It carries out the reaction L-tyrosine(in) = L-tyrosine(out). The catalysed reaction is L-tryptophan(in) = L-tryptophan(out). It catalyses the reaction L-threonine(in) = L-threonine(out). The enzyme catalyses L-methionine(in) = L-methionine(out). It carries out the reaction L-lysine(in) = L-lysine(out). The catalysed reaction is L-glutamate(out) = L-glutamate(in). It catalyses the reaction L-valine(in) = L-valine(out). The enzyme catalyses L-isoleucine(in) = L-isoleucine(out). In terms of biological role, amino acid transporter with broad substrate specificity. Can transport various amino acids, including phenylalanine, tyrosine, tryptophan, L-threonine, L-methionine, L-lysine, L-glutamate, L-valine and L-isoleucine. Overexpression confers resistance to phenylalanine and increases export of phenylalanine, tyrosine and tryptophan. The polypeptide is Aromatic amino acid exporter YddG (yddG) (Escherichia coli (strain K12)).